A 437-amino-acid chain; its full sequence is Probable peptidoglycan-N-acetylglucosamine deacetylase ARB_03699 (437 aa).

The signal sequence occupies residues 1-20 (MLMRLYTFFAAALLACCAAA). The segment at 47 to 132 (STRAATTTTT…STSAAAPSTP (86 aa)) is disordered. Residue asparagine 99 is glycosylated (N-linked (GlcNAc...) asparagine). In terms of domain architecture, NodB homology spans 149–334 (GTVAITFDDG…EVKRRGLKAV (186 aa)). Aspartate 156 acts as the Proton acceptor in catalysis. Residues aspartate 157, histidine 209, and histidine 213 each contribute to the Zn(2+) site. Substrate is bound at residue tyrosine 251. The active-site Proton donor is the histidine 308. The segment covering 350-370 (TTPVQVPTGTSTTSPTATPTS) has biased composition (low complexity). A disordered region spans residues 350 to 384 (TTPVQVPTGTSTTSPTATPTSPGTPPPAPTQPGVA). The 47-residue stretch at 389 to 435 (KWHTVVSGDTCYDIAAANGISLDNLYKWNPAVGTSCASLWLGYAVCV) folds into the LysM domain.

It depends on Zn(2+) as a cofactor. Co(2+) serves as cofactor.

It is found in the secreted. The catalysed reaction is peptidoglycan-N-acetyl-D-glucosamine + H2O = peptidoglycan-D-glucosamine + acetate.. Its function is as follows. Catalyzes the deacetylation of N-acetylglucosamine (GlcNAc) residues in peptidoglycan. The sequence is that of Probable peptidoglycan-N-acetylglucosamine deacetylase ARB_03699 from Arthroderma benhamiae (strain ATCC MYA-4681 / CBS 112371) (Trichophyton mentagrophytes).